We begin with the raw amino-acid sequence, 467 residues long: F-box protein pof9 (467 aa).

The 47-residue stretch at 3–49 folds into the F-box domain; it reads KSPFLELSYDILLEISTYLDYKDIVHLSETCKSLSYVFDDKTIWHRF. RCC1 repeat units lie at residues 77–131, 302–354, and 355–417; these read RGYA…LLNE, ETFT…YLTS, and DHSI…AAGG.

As to quaternary structure, interacts with skp1.

It localises to the cytoplasm. Its subcellular location is the nucleus. This Schizosaccharomyces pombe (strain 972 / ATCC 24843) (Fission yeast) protein is F-box protein pof9 (pof9).